Here is a 367-residue protein sequence, read N- to C-terminus: Anhydro-N-acetylmuramic acid kinase (367 aa).

Position 11-18 (11-18 (GTSLDGVD)) interacts with ATP.

This sequence belongs to the anhydro-N-acetylmuramic acid kinase family.

The catalysed reaction is 1,6-anhydro-N-acetyl-beta-muramate + ATP + H2O = N-acetyl-D-muramate 6-phosphate + ADP + H(+). The protein operates within amino-sugar metabolism; 1,6-anhydro-N-acetylmuramate degradation. It participates in cell wall biogenesis; peptidoglycan recycling. Functionally, catalyzes the specific phosphorylation of 1,6-anhydro-N-acetylmuramic acid (anhMurNAc) with the simultaneous cleavage of the 1,6-anhydro ring, generating MurNAc-6-P. Is required for the utilization of anhMurNAc either imported from the medium or derived from its own cell wall murein, and thus plays a role in cell wall recycling. The chain is Anhydro-N-acetylmuramic acid kinase from Bradyrhizobium diazoefficiens (strain JCM 10833 / BCRC 13528 / IAM 13628 / NBRC 14792 / USDA 110).